The following is a 488-amino-acid chain: ATP synthase subunit beta (488 aa).

G164–T171 contributes to the ATP binding site.

The protein belongs to the ATPase alpha/beta chains family. In terms of assembly, F-type ATPases have 2 components, CF(1) - the catalytic core - and CF(0) - the membrane proton channel. CF(1) has five subunits: alpha(3), beta(3), gamma(1), delta(1), epsilon(1). CF(0) has four main subunits: a(1), b(1), b'(1) and c(9-12).

It localises to the cellular thylakoid membrane. It carries out the reaction ATP + H2O + 4 H(+)(in) = ADP + phosphate + 5 H(+)(out). Functionally, produces ATP from ADP in the presence of a proton gradient across the membrane. The catalytic sites are hosted primarily by the beta subunits. The protein is ATP synthase subunit beta of Prochlorococcus marinus (strain MIT 9303).